The following is a 616-amino-acid chain: Secretogranin-2 (616 aa).

The signal sequence occupies residues 1–27 (MAEAKTHWLGASLSLILLIFLLATAEA). The propeptide occupies 28-30 (ASF). Disordered stretches follow at residues 68-104 (QAHK…RDSL) and 120-146 (AENE…PMDM). The segment covering 92-104 (ENSDLPESSRDSL) has biased composition (basic and acidic residues). A compositionally biased stretch (polar residues) spans 122–140 (NEPQSSLKENKPYTLNSEK). Tyrosine 150 bears the Sulfotyrosine mark. Serine 173, serine 267, serine 431, serine 531, serine 554, and serine 555 each carry phosphoserine. The segment covering 255 to 283 (KIESQTQEEVRDSKENIEKNEQINDEMKR) has biased composition (basic and acidic residues). The disordered stretch occupies residues 255 to 290 (KIESQTQEEVRDSKENIEKNEQINDEMKRSGQMGLQ). A compositionally biased stretch (basic and acidic residues) spans 548–560 (ERLNQHSSQETDK). The disordered stretch occupies residues 548–582 (ERLNQHSSQETDKLALVSKRLPVATPKSDDAPNRQ).

It belongs to the chromogranin/secretogranin protein family. As to quaternary structure, interacts with Secretogranin III/SCG3.

The protein resides in the secreted. Functionally, neuroendocrine protein of the granin family that regulates the biogenesis of secretory granules. This Sus scrofa (Pig) protein is Secretogranin-2 (SCG2).